We begin with the raw amino-acid sequence, 684 residues long: Glycine--tRNA ligase beta subunit (684 aa).

The protein belongs to the class-II aminoacyl-tRNA synthetase family. As to quaternary structure, tetramer of two alpha and two beta subunits.

It is found in the cytoplasm. It catalyses the reaction tRNA(Gly) + glycine + ATP = glycyl-tRNA(Gly) + AMP + diphosphate. The sequence is that of Glycine--tRNA ligase beta subunit from Pseudomonas savastanoi pv. phaseolicola (strain 1448A / Race 6) (Pseudomonas syringae pv. phaseolicola (strain 1448A / Race 6)).